We begin with the raw amino-acid sequence, 358 residues long: UDP-N-acetylglucosamine--N-acetylmuramyl-(pentapeptide) pyrophosphoryl-undecaprenol N-acetylglucosamine transferase (358 aa).

UDP-N-acetyl-alpha-D-glucosamine is bound by residues 13-15 (TAG), arginine 166, serine 196, and glutamine 291.

Belongs to the glycosyltransferase 28 family. MurG subfamily.

It localises to the cell membrane. It carries out the reaction di-trans,octa-cis-undecaprenyl diphospho-N-acetyl-alpha-D-muramoyl-L-alanyl-D-glutamyl-meso-2,6-diaminopimeloyl-D-alanyl-D-alanine + UDP-N-acetyl-alpha-D-glucosamine = di-trans,octa-cis-undecaprenyl diphospho-[N-acetyl-alpha-D-glucosaminyl-(1-&gt;4)]-N-acetyl-alpha-D-muramoyl-L-alanyl-D-glutamyl-meso-2,6-diaminopimeloyl-D-alanyl-D-alanine + UDP + H(+). It functions in the pathway cell wall biogenesis; peptidoglycan biosynthesis. In terms of biological role, cell wall formation. Catalyzes the transfer of a GlcNAc subunit on undecaprenyl-pyrophosphoryl-MurNAc-pentapeptide (lipid intermediate I) to form undecaprenyl-pyrophosphoryl-MurNAc-(pentapeptide)GlcNAc (lipid intermediate II). This is UDP-N-acetylglucosamine--N-acetylmuramyl-(pentapeptide) pyrophosphoryl-undecaprenol N-acetylglucosamine transferase from Clostridium botulinum (strain Alaska E43 / Type E3).